The following is a 105-amino-acid chain: Large ribosomal subunit protein uL24 (105 aa).

Belongs to the universal ribosomal protein uL24 family. In terms of assembly, part of the 50S ribosomal subunit.

Its function is as follows. One of two assembly initiator proteins, it binds directly to the 5'-end of the 23S rRNA, where it nucleates assembly of the 50S subunit. In terms of biological role, one of the proteins that surrounds the polypeptide exit tunnel on the outside of the subunit. The chain is Large ribosomal subunit protein uL24 from Mycolicibacterium smegmatis (strain ATCC 700084 / mc(2)155) (Mycobacterium smegmatis).